The following is a 253-amino-acid chain: 3-deoxy-manno-octulosonate cytidylyltransferase (253 aa).

Belongs to the KdsB family.

The protein localises to the cytoplasm. The enzyme catalyses 3-deoxy-alpha-D-manno-oct-2-ulosonate + CTP = CMP-3-deoxy-beta-D-manno-octulosonate + diphosphate. Its pathway is nucleotide-sugar biosynthesis; CMP-3-deoxy-D-manno-octulosonate biosynthesis; CMP-3-deoxy-D-manno-octulosonate from 3-deoxy-D-manno-octulosonate and CTP: step 1/1. It participates in bacterial outer membrane biogenesis; lipopolysaccharide biosynthesis. In terms of biological role, activates KDO (a required 8-carbon sugar) for incorporation into bacterial lipopolysaccharide in Gram-negative bacteria. The protein is 3-deoxy-manno-octulosonate cytidylyltransferase of Aeromonas hydrophila subsp. hydrophila (strain ATCC 7966 / DSM 30187 / BCRC 13018 / CCUG 14551 / JCM 1027 / KCTC 2358 / NCIMB 9240 / NCTC 8049).